The sequence spans 346 residues: LRP2-binding protein (346 aa).

The stretch at 58-91 is one TPR repeat; that stretch reads AMAYFLRGQLYFEEGWYEEALAQFEEIQEKDHQA. Sel1-like repeat units lie at residues 92 to 124, 132 to 167, 172 to 205, 206 to 241, 242 to 276, and 296 to 331; these read IYQL…DSSC, FAAA…DNGN, VKAQ…GNGN, LESQ…ERGN, VYAQ…EVHD, and AMAS…RLNP.

In terms of assembly, interacts with LRP2.

It is found in the cytoplasm. Functionally, may act as an adapter that regulates LRP2 function. The polypeptide is LRP2-binding protein (Lrp2bp) (Rattus norvegicus (Rat)).